Consider the following 69-residue polypeptide: UPF0434 protein Rmet_0534 (69 aa).

Belongs to the UPF0434 family.

This is UPF0434 protein Rmet_0534 from Cupriavidus metallidurans (strain ATCC 43123 / DSM 2839 / NBRC 102507 / CH34) (Ralstonia metallidurans).